Here is a 496-residue protein sequence, read N- to C-terminus: Protein nucleotidyltransferase YdiU (496 aa).

The ATP site is built by Gly98, Gly100, Arg101, Lys116, Asp128, Gly129, Arg179, and Arg186. The Proton acceptor role is filled by Asp259. Mg(2+) contacts are provided by Asn260 and Asp269. Asp269 contributes to the ATP binding site.

This sequence belongs to the SELO family. Mg(2+) is required as a cofactor. Requires Mn(2+) as cofactor.

The enzyme catalyses L-seryl-[protein] + ATP = 3-O-(5'-adenylyl)-L-seryl-[protein] + diphosphate. It catalyses the reaction L-threonyl-[protein] + ATP = 3-O-(5'-adenylyl)-L-threonyl-[protein] + diphosphate. It carries out the reaction L-tyrosyl-[protein] + ATP = O-(5'-adenylyl)-L-tyrosyl-[protein] + diphosphate. The catalysed reaction is L-histidyl-[protein] + UTP = N(tele)-(5'-uridylyl)-L-histidyl-[protein] + diphosphate. The enzyme catalyses L-seryl-[protein] + UTP = O-(5'-uridylyl)-L-seryl-[protein] + diphosphate. It catalyses the reaction L-tyrosyl-[protein] + UTP = O-(5'-uridylyl)-L-tyrosyl-[protein] + diphosphate. Its function is as follows. Nucleotidyltransferase involved in the post-translational modification of proteins. It can catalyze the addition of adenosine monophosphate (AMP) or uridine monophosphate (UMP) to a protein, resulting in modifications known as AMPylation and UMPylation. The sequence is that of Protein nucleotidyltransferase YdiU from Albidiferax ferrireducens (strain ATCC BAA-621 / DSM 15236 / T118) (Rhodoferax ferrireducens).